A 554-amino-acid chain; its full sequence is (S)-1-hydroxy-N-methylcanadine 13-hydroxylase CYP82X2 (554 aa).

The helical transmembrane segment at 23 to 43 (IISTFIVTIISIVFLYTVLLI) threads the bilayer. Heme is bound at residue cysteine 494.

The protein belongs to the cytochrome P450 family. Heme serves as cofactor. Highly expressed in capsules. Expressed is stems.

It is found in the membrane. The enzyme catalyses (S)-1-hydroxy-N-methylcanadine + reduced [NADPH--hemoprotein reductase] + O2 = (13S,14R)-1,13-dihydroxy-N-methylcanadine + oxidized [NADPH--hemoprotein reductase] + H2O + H(+). Its pathway is alkaloid biosynthesis. Cytochrome P450 involved in the biosynthesis of the benzylisoquinoline alkaloid noscapine. Converts (S)-1-hydroxy-N-methylcanadine to (13S,14R)-1,13-dihydroxy-N-methylcanadine. The chain is (S)-1-hydroxy-N-methylcanadine 13-hydroxylase CYP82X2 from Papaver somniferum (Opium poppy).